Reading from the N-terminus, the 837-residue chain is Outer membrane usher protein HifC (837 aa).

The signal sequence occupies residues methionine 1–alanine 26. A disulfide bond links cysteine 813 and cysteine 833.

This sequence belongs to the fimbrial export usher family.

It localises to the cell outer membrane. Its function is as follows. Essential for piliation. This chain is Outer membrane usher protein HifC (hifC), found in Haemophilus influenzae.